The following is a 430-amino-acid chain: uncharacterized protein (430 aa).

This is an uncharacterized protein from Escherichia coli (strain K12).